The primary structure comprises 597 residues: Nucleolar protein 58 (597 aa).

Positions 285 to 410 (IAPNMTELVG…LENNLRQLEG (126 aa)) constitute a Nop domain. A disordered region spans residues 452-597 (AEAPKKPLIQ…KKKKKKSSKE (146 aa)). A compositionally biased stretch (basic residues) spans 482–499 (KSKKDKKEKKEKKDKKAK). The span at 532–551 (IKEDGTLEILSKKDFKGKDA) shows a compositional bias: basic and acidic residues. Residues 552 to 561 (EAEEEAEEEE) are compositionally biased toward acidic residues. Residues 588-597 (KKKKKKSSKE) show a composition bias toward basic residues.

Belongs to the NOP5/NOP56 family.

The protein localises to the nucleus. The protein resides in the nucleolus. In terms of biological role, required for pre-18S rRNA processing. May bind microtubules. This is Nucleolar protein 58 (nop-58) from Neurospora crassa (strain ATCC 24698 / 74-OR23-1A / CBS 708.71 / DSM 1257 / FGSC 987).